Here is a 288-residue protein sequence, read N- to C-terminus: ATP synthase gamma chain 1 (288 aa).

This sequence belongs to the ATPase gamma chain family. In terms of assembly, F-type ATPases have 2 components, CF(1) - the catalytic core - and CF(0) - the membrane proton channel. CF(1) has five subunits: alpha(3), beta(3), gamma(1), delta(1), epsilon(1). CF(0) has three main subunits: a, b and c.

The protein localises to the cell inner membrane. Functionally, produces ATP from ADP in the presence of a proton gradient across the membrane. The gamma chain is believed to be important in regulating ATPase activity and the flow of protons through the CF(0) complex. The polypeptide is ATP synthase gamma chain 1 (Photobacterium profundum (strain SS9)).